The primary structure comprises 513 residues: MEKFEGYSEKQKSRQQNFVFPLLFQEYIYAFAHDYGLNGCKPVEILGCNTKKFSSLLVKRLIIRMYQQNFWINSVNHPNQDLLLDRSNHFYSEFYSQILSEGFAIVVEIPFSLGELSYSQEKEIPKFQNLQSIHSIFPFLEDKFLHLHSISHIEIPYPIHLEILVQFLEYRIQDVPSLHLLRFFLNYYSNWNSLITSMKSFFLLKKENKRLFQFLYNSYVSEYEFFLLFLHKQSSCLPLTSSGTFLERIIFSRKMEHFGVMYPEFFRKTIWIFMDPLMHYVRYQGKAILASKGTLLLKKKWKSYLVNFSQYFFSFWTQPQRICLNRLTNSCFDFMGYLSSVPINTLLVRNQMLDNSFRISIRMKKFDTIVPATPLIGALSKAQFCTGSGHPISKPVWTDLSDWDILDRFGRICRNLFHYHSGSSKKQTLYRLKYILRLSCARTLARKHKSTVRTFMQRLGSVFLEEFFTEEEQVFSLMFIKTTHFSFHGSHSDRIWYLDIIRINDLVNPLTLN.

Belongs to the intron maturase 2 family. MatK subfamily.

The protein resides in the plastid. Its subcellular location is the chloroplast. Usually encoded in the trnK tRNA gene intron. Probably assists in splicing its own and other chloroplast group II introns. The polypeptide is Maturase K (Danthonia spicata (Poverty oatgrass)).